A 486-amino-acid polypeptide reads, in one-letter code: UDP-N-acetylglucosamine pyrophosphorylase (486 aa).

The Substrate binding motif lies at 109-112; it reads MAGG. UTP is bound by residues 109–112, lysine 123, glutamine 199, and glycine 226; that span reads MAGG. Asparagine 227 provides a ligand contact to substrate. UTP is bound at residue aspartate 257. The short motif at 309-310 is the Substrate binding element; sequence EY. Lysine 389 contributes to the UTP binding site. Position 421 (lysine 421) interacts with substrate.

It belongs to the UDPGP type 1 family.

It is found in the cytoplasm. It carries out the reaction N-acetyl-alpha-D-glucosamine 1-phosphate + UTP + H(+) = UDP-N-acetyl-alpha-D-glucosamine + diphosphate. It functions in the pathway nucleotide-sugar biosynthesis; UDP-N-acetyl-alpha-D-glucosamine biosynthesis; UDP-N-acetyl-alpha-D-glucosamine from N-acetyl-alpha-D-glucosamine 1-phosphate: step 1/1. This is UDP-N-acetylglucosamine pyrophosphorylase (UAP1) from Candida albicans (Yeast).